The sequence spans 250 residues: Intermembrane phospholipid transport system lipoprotein MlaA (250 aa).

The N-terminal stretch at 1-18 (MKTKTILTALLSAIALTG) is a signal peptide. Cysteine 19 carries N-palmitoyl cysteine lipidation. Residue cysteine 19 is the site of S-diacylglycerol cysteine attachment.

Belongs to the MlaA family.

The protein localises to the cell outer membrane. Involved in a phospholipid transport pathway that maintains lipid asymmetry in the outer membrane by retrograde trafficking of phospholipids from the outer membrane to the inner membrane. The chain is Intermembrane phospholipid transport system lipoprotein MlaA from Haemophilus influenzae (strain ATCC 51907 / DSM 11121 / KW20 / Rd).